Consider the following 161-residue polypeptide: MATDVAFDTSMGSFTVELYNSHAPKTCKNFATLAQRGYYNNVIFHRIIPNFMVQTGDPTGTGRGGSSIYGEKFEDEIRADLKHTGAGILSMANSGPNTNGSQFFVTLAPTPWLDGKHTIFGRVKSGMRVIQRMGLVKTNGEDRPVDEVKIIRARVVEEGEE.

Residues 1 to 155 (MATDVAFDTS…DEVKIIRARV (155 aa)) enclose the PPIase cyclophilin-type domain.

The protein belongs to the cyclophilin-type PPIase family. PPIL1 subfamily.

It catalyses the reaction [protein]-peptidylproline (omega=180) = [protein]-peptidylproline (omega=0). In terms of biological role, PPIases accelerate the folding of proteins. It catalyzes the cis-trans isomerization of proline imidic peptide bonds in oligopeptides. This chain is Peptidyl-prolyl cis-trans isomerase-like 1 (cyp1), found in Aspergillus oryzae (strain ATCC 42149 / RIB 40) (Yellow koji mold).